We begin with the raw amino-acid sequence, 794 residues long: Mitochondrial intermediate peptidase (794 aa).

The transit peptide at 1–39 directs the protein to the mitochondrion; it reads MRVTSSRLLQGGSLVSRVLKRRLNNASRTKKGWFSTRTL. Zn(2+) is bound at residue His581. Glu582 is an active-site residue. Zn(2+) contacts are provided by His585 and His588.

This sequence belongs to the peptidase M3 family. Zn(2+) is required as a cofactor.

The protein localises to the mitochondrion matrix. It carries out the reaction Release of an N-terminal octapeptide as second stage of processing of some proteins imported into the mitochondrion.. In terms of biological role, cleaves proteins, imported into the mitochondrion, to their mature size. While most mitochondrial precursor proteins are processed to the mature form in one step by mitochondrial processing peptidase (MPP), the sequential cleavage by MIP of an octapeptide after initial processing by MPP is a required step for a subgroup of nuclear-encoded precursor proteins destined for the matrix or the inner membrane. The chain is Mitochondrial intermediate peptidase (OCT1) from Debaryomyces hansenii (strain ATCC 36239 / CBS 767 / BCRC 21394 / JCM 1990 / NBRC 0083 / IGC 2968) (Yeast).